A 430-amino-acid chain; its full sequence is Nacrein-like protein P2 (430 aa).

The N-linked (GlcNAc...) asparagine glycan is linked to N27. The region spanning 33–429 is the Alpha-carbonic anhydrase domain; sequence AGFSYDRSIC…KNKVTVYKSF (397 aa). Zn(2+)-binding residues include H132, H134, and H157. The segment at 201–312 is disordered; the sequence is DEPDDEECKR…GENGHKHGCR (112 aa). Residues 207 to 219 show a composition bias toward basic and acidic residues; it reads ECKRILKGHHPDN. Low complexity predominate over residues 220–304; the sequence is NENGNGDNGN…NNGENGNNGE (85 aa). 27 repeat units span residues 225–227, 228–230, 231–233, 234–236, 237–239, 240–242, 243–245, 246–248, 249–251, 252–254, 255–257, 258–260, 261–263, 264–266, 267–269, 270–272, 273–275, 276–278, 279–281, 282–284, 285–287, 288–290, 291–293, 294–296, 297–299, 300–301, and 303–305. The interval 225–305 is 27 X 3 AA approximate tandem repeats of G-X-N; it reads GDNGNNGYNG…NGENGNNGEN (81 aa). 370–371 contacts substrate; the sequence is TT.

It belongs to the alpha-carbonic anhydrase family. Homooligomer; disulfide-linked. May also be disulfide-linked to insoluble organic matrix. It depends on Zn(2+) as a cofactor. Expressed in the mantle.

The protein resides in the secreted. Its subcellular location is the extracellular space. It localises to the extracellular matrix. It carries out the reaction hydrogencarbonate + H(+) = CO2 + H2O. Its function is as follows. Acts as a negative regulator for calcification in the shells of mollusks. May function both as a calcium concentrator and as a carbonic anhydrase required for production of carbonate ions, which are assembled to CaCO(3) at mineralization sites. Is important for shell formation in both the calcitic prismatic layer and the aragonitic nacreous layer. Shows inhibitory activity of crystal formation when present in free state but, when attached to the insoluble matrix, may regulate the form and size of aragonite crystal. This is Nacrein-like protein P2 from Mizuhopecten yessoensis (Japanese scallop).